The sequence spans 83 residues: CLAVATA3/ESR (CLE)-related protein 3 (83 aa).

The N-terminal stretch at 1–24 is a signal peptide; it reads MASLKLWVCLVLLLVLELTSVHEC. Residues 38 to 58 are a coiled coil; the sequence is RLKKIRRELFERLKEMKGRSE. Positions 53–83 are disordered; sequence MKGRSEGEETILGNTLDSKRLSPGGPDPRHH. Residues Pro75 and Pro78 each carry the hydroxyproline modification. Pro78 carries O-linked (Ara...) hydroxyproline glycosylation.

This sequence belongs to the CLV3/ESR signal peptide family. Post-translationally, the O-glycosylation (arabinosylation) of the hydroxyproline Pro-78 enhances binding affinity of the CLE3p peptide for its receptor. Mostly expressed in roots, stems and apex, and, to a lower extent, in seedlings, leaves, flowers, siliques and pollen.

The protein resides in the secreted. Its subcellular location is the extracellular space. Functionally, extracellular signal peptide that regulates cell fate. The protein is CLAVATA3/ESR (CLE)-related protein 3 of Arabidopsis thaliana (Mouse-ear cress).